The sequence spans 390 residues: Phosphoglycerate kinase (390 aa).

Residues 21-23, R36, 59-62, R112, and R145 each bind substrate; these read DLN and HLGR. ATP is bound by residues K196, E317, and 343–346; that span reads GGDT.

Belongs to the phosphoglycerate kinase family. As to quaternary structure, monomer.

The protein localises to the cytoplasm. It carries out the reaction (2R)-3-phosphoglycerate + ATP = (2R)-3-phospho-glyceroyl phosphate + ADP. It participates in carbohydrate degradation; glycolysis; pyruvate from D-glyceraldehyde 3-phosphate: step 2/5. The chain is Phosphoglycerate kinase from Cellvibrio japonicus (strain Ueda107) (Pseudomonas fluorescens subsp. cellulosa).